A 303-amino-acid polypeptide reads, in one-letter code: Protoheme IX farnesyltransferase (303 aa).

9 consecutive transmembrane segments (helical) span residues 26 to 46 (VVAL…PGMV), 48 to 68 (IDIL…AAAV), 98 to 118 (AILF…VWVN), 120 to 140 (LTAW…TFWL), 148 to 168 (IVIG…AVTG), 174 to 194 (ALLL…ALAV), 221 to 241 (ILLY…THML), 244 to 264 (LYLL…VAMM), and 278 to 298 (YSIV…YLLP).

Belongs to the UbiA prenyltransferase family. Protoheme IX farnesyltransferase subfamily.

The protein localises to the cell inner membrane. It carries out the reaction heme b + (2E,6E)-farnesyl diphosphate + H2O = Fe(II)-heme o + diphosphate. It functions in the pathway porphyrin-containing compound metabolism; heme O biosynthesis; heme O from protoheme: step 1/1. Functionally, converts heme B (protoheme IX) to heme O by substitution of the vinyl group on carbon 2 of heme B porphyrin ring with a hydroxyethyl farnesyl side group. This is Protoheme IX farnesyltransferase from Saccharophagus degradans (strain 2-40 / ATCC 43961 / DSM 17024).